The primary structure comprises 422 residues: Phosphoribosylamine--glycine ligase (422 aa).

Residues 107-312 enclose the ATP-grasp domain; the sequence is KDVMAAAGVR…LGQLLHAAAT (206 aa). 137 to 193 is a binding site for ATP; it reads GPPAGDPAWVVKDDRLAAGKGVVVTADRDVARAHGAALLEAGHPVLLESYLDGPEVS. The Mg(2+) site is built by Glu282 and Asn284.

Belongs to the GARS family. Mg(2+) is required as a cofactor. Requires Mn(2+) as cofactor.

It catalyses the reaction 5-phospho-beta-D-ribosylamine + glycine + ATP = N(1)-(5-phospho-beta-D-ribosyl)glycinamide + ADP + phosphate + H(+). The protein operates within purine metabolism; IMP biosynthesis via de novo pathway; N(1)-(5-phospho-D-ribosyl)glycinamide from 5-phospho-alpha-D-ribose 1-diphosphate: step 2/2. This Mycobacterium bovis (strain ATCC BAA-935 / AF2122/97) protein is Phosphoribosylamine--glycine ligase.